The chain runs to 180 residues: uncharacterized protein (180 aa).

This is an uncharacterized protein from Rickettsia prowazekii (strain Madrid E).